The sequence spans 232 residues: tRNA1(Val) (adenine(37)-N6)-methyltransferase (232 aa).

Belongs to the methyltransferase superfamily. tRNA (adenine-N(6)-)-methyltransferase family.

Its subcellular location is the cytoplasm. The enzyme catalyses adenosine(37) in tRNA1(Val) + S-adenosyl-L-methionine = N(6)-methyladenosine(37) in tRNA1(Val) + S-adenosyl-L-homocysteine + H(+). Functionally, specifically methylates the adenine in position 37 of tRNA(1)(Val) (anticodon cmo5UAC). This chain is tRNA1(Val) (adenine(37)-N6)-methyltransferase, found in Haemophilus influenzae (strain PittGG).